Reading from the N-terminus, the 265-residue chain is Mlc titration factor A (265 aa).

Residues His111, His148, His152, and Glu211 each coordinate Zn(2+).

Belongs to the MtfA family. Interacts with Mlc. The cofactor is Zn(2+).

It is found in the cytoplasm. In terms of biological role, involved in the modulation of the activity of the glucose-phosphotransferase system (glucose-PTS). Interacts with the transcriptional repressor Mlc, preventing its interaction with DNA and leading to the modulation of expression of genes regulated by Mlc, including ptsG, which encodes the PTS system glucose-specific EIICB component. Functionally, shows zinc-dependent metallopeptidase activity. The polypeptide is Mlc titration factor A (Salmonella agona (strain SL483)).